The chain runs to 418 residues: Endoglucanase EG-II (418 aa).

A signal peptide spans 1–21 (MNKSVAPLLLAASILYGGAVA). Position 22 is a pyrrolidone carboxylic acid (glutamine 22). The 36-residue stretch at 22–57 (QQTVWGQCGGIGWSGPTNCAPGSACSTLNPYYAQCI) folds into the CBM1 domain. The linker stretch occupies residues 58–91 (PGATTITTSTRPPSGPTTTTRATSTSSSTPPTSS). The interval 63 to 91 (ITTSTRPPSGPTTTTRATSTSSSTPPTSS) is disordered. The catalytic stretch occupies residues 92-418 (GVRFAGVNIA…SLVSSCLARK (327 aa)). Cysteine 107 and cysteine 113 are oxidised to a cystine. An N-linked (GlcNAc) asparagine glycan is attached at asparagine 124. Cysteine 183 and cysteine 190 form a disulfide bridge. The active-site Proton donor/acceptor is the glutamate 239. Cystine bridges form between cysteine 323–cysteine 359 and cysteine 364–cysteine 414. The active-site Nucleophile is the glutamate 350.

Belongs to the glycosyl hydrolase 5 (cellulase A) family.

It is found in the secreted. The catalysed reaction is Endohydrolysis of (1-&gt;4)-beta-D-glucosidic linkages in cellulose, lichenin and cereal beta-D-glucans.. Functionally, endoglucanase (EG) that cleaves the internal beta-1,4-glucosidic bonds in cellulose. The degradation of cellulose involves an interplay between different cellulolytic enzymes. Hydrolysis starts with EGs, which cut internal glycosidic linkages to reduce the polymerization degree of the substrate and creates new chain ends for exocellobiohydrolases (CBHs). The CBH release the disaccharide cellobiose from the non-reducing end of the cellulose polymer chain. Finally, beta-1,4-glucosidases hydrolyze the cellobiose and other short cello-oligosaccharides into glucose units. This Hypocrea jecorina (Trichoderma reesei) protein is Endoglucanase EG-II (egl2).